Consider the following 376-residue polypeptide: Putative F-box protein At3g18330 (376 aa).

One can recognise an F-box domain in the interval 1–46 (MPMPNLPKELVEEILSFVPATYLKRLSATCKPWNRLIHNDKRFARK).

The sequence is that of Putative F-box protein At3g18330 from Arabidopsis thaliana (Mouse-ear cress).